The sequence spans 488 residues: Glutamyl-tRNA(Gln) amidotransferase subunit A (488 aa).

Active-site charge relay system residues include lysine 77 and serine 152. The Acyl-ester intermediate role is filled by serine 176.

It belongs to the amidase family. GatA subfamily. As to quaternary structure, heterotrimer of A, B and C subunits.

It carries out the reaction L-glutamyl-tRNA(Gln) + L-glutamine + ATP + H2O = L-glutaminyl-tRNA(Gln) + L-glutamate + ADP + phosphate + H(+). Its function is as follows. Allows the formation of correctly charged Gln-tRNA(Gln) through the transamidation of misacylated Glu-tRNA(Gln) in organisms which lack glutaminyl-tRNA synthetase. The reaction takes place in the presence of glutamine and ATP through an activated gamma-phospho-Glu-tRNA(Gln). This chain is Glutamyl-tRNA(Gln) amidotransferase subunit A, found in Streptococcus gordonii (strain Challis / ATCC 35105 / BCRC 15272 / CH1 / DL1 / V288).